We begin with the raw amino-acid sequence, 141 residues long: Large ribosomal subunit protein uL16 (141 aa).

Belongs to the universal ribosomal protein uL16 family. As to quaternary structure, part of the 50S ribosomal subunit.

Its function is as follows. Binds 23S rRNA and is also seen to make contacts with the A and possibly P site tRNAs. The protein is Large ribosomal subunit protein uL16 of Kosmotoga olearia (strain ATCC BAA-1733 / DSM 21960 / TBF 19.5.1).